A 114-amino-acid chain; its full sequence is Class I hydrophobin SC16 (114 aa).

The signal sequence occupies residues 1-17 (MRFFATLVLALPALAMA). 4 disulfides stabilise this stretch: C33/C93, C40/C87, C41/C74, and C94/C107. An N-linked (GlcNAc...) asparagine glycan is attached at N42.

The protein belongs to the fungal hydrophobin family. Self-assembles to form functional amyloid fibrils called rodlets. Self-assembly into fibrillar rodlets occurs spontaneously at hydrophobic:hydrophilic interfaces and the rodlets further associate laterally to form amphipathic monolayers.

It is found in the secreted. It localises to the cell wall. Its function is as follows. Aerial growth, conidiation, and dispersal of filamentous fungi in the environment rely upon a capability of their secreting small amphipathic proteins called hydrophobins (HPBs) with low sequence identity. Class I can self-assemble into an outermost layer of rodlet bundles on aerial cell surfaces, conferring cellular hydrophobicity that supports fungal growth, development and dispersal; whereas Class II form highly ordered films at water-air interfaces through intermolecular interactions but contribute nothing to the rodlet structure. In Schizophyllum commune (strain H4-8 / FGSC 9210) (Split gill fungus), this protein is Class I hydrophobin SC16.